Consider the following 237-residue polypeptide: MDAYSSFPAEFEAVRPIYNVLVATAGMMWLINYIVTVRQIFRDRVRAIPLVSLCCNIAWEFTVVLVYRRPYLLFEIFCAMWLLVNMVIVYGSVKVSMEKQRSSSLVHKHLPLIVPLAILGCISGYYALAKTIGTPKTIHGGGTFASFVMTVDCLCQLLQRGSTHGASWTMWLTRVLGSYAAIVGEFLKAGFWPQQWGWYDNALMRWCTGMAVTMDILYACIFWYMGQAEEAAKGRKA.

7 consecutive transmembrane segments (helical) span residues 17-37 (IYNV…IVTV), 47-67 (AIPL…VLVY), 71-91 (YLLF…IVYG), 109-129 (HLPL…YALA), 138-158 (IHGG…CQLL), 167-187 (SWTM…GEFL), and 206-226 (WCTG…WYMG).

The protein belongs to the paxB family.

The protein resides in the membrane. The enzyme catalyses (S)-(2E,6E,10E)-epoxygeranylgeranyl-triacetate lactone = sartorypyrone F. It carries out the reaction (S)-(2E,6E,10E)-epoxygeranylgeranyl-triacetate lactone = sartorypyrone D. The protein operates within secondary metabolite biosynthesis; terpenoid biosynthesis. Functionally, terpene cyclase; part of the gene cluster that mediates the biosynthesis of meroterpenoids called sartorypyrones. Within the pathway, spyD catalyzes the cyclization of epoxygeranylgeranyl-triacetate lactone. SpyD exhibits promiscuous activity, resulting in the formation of bicyclic sartorypyrone F and monocyclic sartorypyrone D. The biosynthesis of sartorypyrones begins with the production of triacetic acid lactone (TAL) by the NR-PKS spyA using one molecule of acetyl-CoA and two molecules of malonyl-CoA. The prenyltransferase spyF then conjugates geranylgeranyl pyrophosphate (GGPP) to TAL to form geranylgeranyl-triacetate lactone, for which the pathway-specific geranylgeranyl pyrophosphate synthase (GGPS) spyE is required to provide GGPP. Subsequently, geranylgeranyl-triacetate lactone is epoxidized at the terminal olein by the FAD-dependent monooxygenase spyC, followed by cyclization of the terpenoid component catalyzed by the terpene cyclase spyD to produce both the bicyclic sartorypyrone F and the monocyclic sartorypyrone D. Finally, the last step of the biosynthesis involves the acetylation of the meroterpenoids sartorypyrones D and F by the acetyltransferase SpyB to produce sartorypyrones A and G, respectively. The chain is Terpene cyclase spyD from Aspergillus fumigatus (strain ATCC MYA-4609 / CBS 101355 / FGSC A1100 / Af293) (Neosartorya fumigata).